Here is a 372-residue protein sequence, read N- to C-terminus: NAD(P)H-quinone oxidoreductase subunit 1 (372 aa).

The next 8 helical transmembrane spans lie at 27-47 (IIWL…GVLV), 97-117 (ILFT…WLIV), 128-148 (VGIG…GLLM), 176-196 (LALS…IDIV), 204-224 (ILSW…ICAL), 266-286 (ILSA…PIPV), 308-328 (SIGI…AILL), and 347-367 (FLLP…LAFP).

Belongs to the complex I subunit 1 family. In terms of assembly, NDH-1 is composed of at least 11 different subunits.

It localises to the cellular thylakoid membrane. The catalysed reaction is a plastoquinone + NADH + (n+1) H(+)(in) = a plastoquinol + NAD(+) + n H(+)(out). It catalyses the reaction a plastoquinone + NADPH + (n+1) H(+)(in) = a plastoquinol + NADP(+) + n H(+)(out). Its function is as follows. NDH-1 shuttles electrons from an unknown electron donor, via FMN and iron-sulfur (Fe-S) centers, to quinones in the respiratory and/or the photosynthetic chain. The immediate electron acceptor for the enzyme in this species is believed to be plastoquinone. Couples the redox reaction to proton translocation, and thus conserves the redox energy in a proton gradient. This chain is NAD(P)H-quinone oxidoreductase subunit 1, found in Prochlorococcus marinus (strain MIT 9301).